Consider the following 471-residue polypeptide: G2/mitotic-specific cyclin-1 (471 aa).

The protein belongs to the cyclin family. Cyclin AB subfamily.

Functionally, essential for the control of the cell cycle at the G2/M (mitosis) transition. Interacts with the CDC2 protein kinase to form MPF. G2/M cyclins accumulate steadily during G2 and are abruptly destroyed at mitosis. The protein is G2/mitotic-specific cyclin-1 (CLB1) of Saccharomyces cerevisiae (strain ATCC 204508 / S288c) (Baker's yeast).